The sequence spans 137 residues: Large ribosomal subunit protein uL16 (137 aa).

It belongs to the universal ribosomal protein uL16 family. As to quaternary structure, part of the 50S ribosomal subunit.

Its function is as follows. Binds 23S rRNA and is also seen to make contacts with the A and possibly P site tRNAs. This is Large ribosomal subunit protein uL16 from Allorhizobium ampelinum (strain ATCC BAA-846 / DSM 112012 / S4) (Agrobacterium vitis (strain S4)).